Reading from the N-terminus, the 61-residue chain is Small ribosomal subunit protein uS14 (61 aa).

Zn(2+)-binding residues include cysteine 24, cysteine 27, cysteine 40, and cysteine 43.

The protein belongs to the universal ribosomal protein uS14 family. Zinc-binding uS14 subfamily. Part of the 30S ribosomal subunit. Contacts proteins S3 and S10. Requires Zn(2+) as cofactor.

In terms of biological role, binds 16S rRNA, required for the assembly of 30S particles and may also be responsible for determining the conformation of the 16S rRNA at the A site. The sequence is that of Small ribosomal subunit protein uS14 from Borrelia garinii subsp. bavariensis (strain ATCC BAA-2496 / DSM 23469 / PBi) (Borreliella bavariensis).